The chain runs to 280 residues: Purine nucleoside phosphorylase (280 aa).

Phosphate is bound by residues Ser15 and 55 to 56 (RH). Met194 contacts substrate. Thr195 is a phosphate binding site. 218 to 220 (DLD) is a substrate binding site.

It belongs to the PNP/MTAP phosphorylase family. MTAP subfamily. As to quaternary structure, homohexamer. Dimer of a homotrimer.

It carries out the reaction a purine D-ribonucleoside + phosphate = a purine nucleobase + alpha-D-ribose 1-phosphate. It participates in purine metabolism; purine nucleoside salvage. Purine nucleoside phosphorylase involved in purine salvage. The chain is Purine nucleoside phosphorylase from Streptomyces coelicolor (strain ATCC BAA-471 / A3(2) / M145).